The following is a 914-amino-acid chain: Zinc finger protein 717 (914 aa).

One can recognise a KRAB domain in the interval 22-93; the sequence is VSFEEVAVHF…EETPNLRLSA (72 aa). The C2H2-type 1; degenerate zinc-finger motif lies at 209–231; that stretch reads FQCNEQGKTFNTEAMFFIHKRVH. A C2H2-type 2; degenerate zinc finger spans residues 266-277; that stretch reads RKSDFTKHQQTH. Residues 283–305 form a C2H2-type 3; degenerate zinc finger; the sequence is YECVECEKPSISKSDLMLQCKMP. 12 consecutive C2H2-type zinc fingers follow at residues 311 to 333, 339 to 361, 367 to 389, 395 to 417, 423 to 445, 451 to 473, 479 to 501, 507 to 529, 535 to 557, 563 to 585, 591 to 613, and 619 to 641; these read YACN…QRIH, YGCN…ERTH, YKCI…HRTH, YQCS…HRTH, YACD…QRTH, YECN…QRTH, YECN…QWTH, YACN…HRTH, YECN…KRTH, and YECN…QGTH. The segment at 649–669 adopts a C2H2-type 16; degenerate zinc-finger fold; the sequence is CNECGKTFHRKSFLTIHQRTH. The segment at 741-752 adopts a C2H2-type 17; degenerate zinc-finger fold; it reads QKSVLTVHHRTH. 5 C2H2-type zinc fingers span residues 758–780, 786–808, 814–836, 842–864, and 870–892; these read YECN…QGTH, YECD…QRTH, FECK…HRTH, FRCN…QRTH, and YECK…QQTH.

This sequence belongs to the krueppel C2H2-type zinc-finger protein family.

It is found in the nucleus. In terms of biological role, may be involved in transcriptional regulation. This Homo sapiens (Human) protein is Zinc finger protein 717.